The primary structure comprises 555 residues: Transmembrane protein 87A (555 aa).

The signal sequence occupies residues 1–21 (MAVAAWLQVSPVIFLLLGAQP). The Lumenal portion of the chain corresponds to 22-225 (FPLSFLGAGP…YEYLTLEDYP (204 aa)). Intrachain disulfides connect Cys74–Cys128 and Cys89–Cys431. N-linked (GlcNAc...) asparagine glycosylation is found at Asn79, Asn157, and Asn160. The chain crosses the membrane as a helical span at residues 226–246 (LMIFFMVMCIVYVLFGVLWLA). At 247 to 257 (WSACYWRDLLR) the chain is on the cytoplasmic side. The helical transmembrane segment at 258 to 278 (IQFWIGAVIFLGMFEKAVFYA) threads the bilayer. Residues 279–305 (EFQNIRYKGESVQNALVLAELLSAVKR) lie on the Lumenal side of the membrane. The chain crosses the membrane as a helical span at residues 306-322 (SLARTLVIIVSLGYGIV). Topologically, residues 323–325 (KPR) are cytoplasmic. The chain crosses the membrane as a helical span at residues 326–346 (LGVTLHKVVVAGALYLLFSGM). The Lumenal segment spans residues 347–361 (EGVLRVTGAQTDLAS). The helical transmembrane segment at 362–382 (LAFIPLAFLDTALCWWIFISL) threads the bilayer. Over 383 to 403 (TQTMKLLKLRRNIVKLSLYRH) the chain is Cytoplasmic. Residues 404–424 (FTNTLILAVAASIVFIIWTTM) form a helical membrane-spanning segment. The Lumenal portion of the chain corresponds to 425–437 (KFRIVTCQSDWRE). The chain crosses the membrane as a helical span at residues 438 to 458 (LWVDDAIWRLLFSMILFVIMI). Topologically, residues 459-555 (LWRPSANNQR…ITHFERSKME (97 aa)) are cytoplasmic. The segment at 491 to 515 (SFEGMKMRSTKQEPNGTSKVNKAQE) is disordered. Polar residues predominate over residues 502-511 (QEPNGTSKVN). Residue Ser540 is modified to Phosphoserine.

The protein belongs to the LU7TM family. TMEM87 subfamily. May interact with STOML3; STOML3 potentiates the mechanosensitive ion channel activity associated with TMEM87A. As to expression, highly expressed in sensory neurons responsive to mechanical force.

The protein resides in the cell membrane. It is found in the golgi apparatus membrane. It localises to the cell projection. Its subcellular location is the ruffle. Functionally, potential monoatomic ion channel gated by mechanical force, implicated in normal touch sensitivity through the generation of mechanically activated currents. However, a direct channel activity is debated and an alternative could be that it functions as a chaperone for an unidentified mechanosensitive ion channel. Could also be involved in cell mechanosensitivity regulating cell adhesion and migration. May also be involved in retrograde transport from endosomes to the trans-Golgi network (TGN). This chain is Transmembrane protein 87A, found in Mus musculus (Mouse).